The following is a 115-amino-acid chain: Large ribosomal subunit protein uL24 (115 aa).

Belongs to the universal ribosomal protein uL24 family. In terms of assembly, part of the 50S ribosomal subunit.

One of two assembly initiator proteins, it binds directly to the 5'-end of the 23S rRNA, where it nucleates assembly of the 50S subunit. Functionally, one of the proteins that surrounds the polypeptide exit tunnel on the outside of the subunit. In Synechocystis sp. (strain ATCC 27184 / PCC 6803 / Kazusa), this protein is Large ribosomal subunit protein uL24.